Reading from the N-terminus, the 186-residue chain is Crossover junction endodeoxyribonuclease RuvC (186 aa).

Active-site residues include Asp-7, Glu-73, and Asp-145. Positions 7, 73, and 145 each coordinate Mg(2+).

This sequence belongs to the RuvC family. As to quaternary structure, homodimer which binds Holliday junction (HJ) DNA. The HJ becomes 2-fold symmetrical on binding to RuvC with unstacked arms; it has a different conformation from HJ DNA in complex with RuvA. In the full resolvosome a probable DNA-RuvA(4)-RuvB(12)-RuvC(2) complex forms which resolves the HJ. Mg(2+) serves as cofactor.

Its subcellular location is the cytoplasm. The enzyme catalyses Endonucleolytic cleavage at a junction such as a reciprocal single-stranded crossover between two homologous DNA duplexes (Holliday junction).. In terms of biological role, the RuvA-RuvB-RuvC complex processes Holliday junction (HJ) DNA during genetic recombination and DNA repair. Endonuclease that resolves HJ intermediates. Cleaves cruciform DNA by making single-stranded nicks across the HJ at symmetrical positions within the homologous arms, yielding a 5'-phosphate and a 3'-hydroxyl group; requires a central core of homology in the junction. The consensus cleavage sequence is 5'-(A/T)TT(C/G)-3'. Cleavage occurs on the 3'-side of the TT dinucleotide at the point of strand exchange. HJ branch migration catalyzed by RuvA-RuvB allows RuvC to scan DNA until it finds its consensus sequence, where it cleaves and resolves the cruciform DNA. The protein is Crossover junction endodeoxyribonuclease RuvC of Acidovorax sp. (strain JS42).